The primary structure comprises 124 residues: Small ribosomal subunit protein uS12 (124 aa).

Aspartate 89 is subject to 3-methylthioaspartic acid.

The protein belongs to the universal ribosomal protein uS12 family. As to quaternary structure, part of the 30S ribosomal subunit. Contacts proteins S8 and S17. May interact with IF1 in the 30S initiation complex.

Its function is as follows. With S4 and S5 plays an important role in translational accuracy. Interacts with and stabilizes bases of the 16S rRNA that are involved in tRNA selection in the A site and with the mRNA backbone. Located at the interface of the 30S and 50S subunits, it traverses the body of the 30S subunit contacting proteins on the other side and probably holding the rRNA structure together. The combined cluster of proteins S8, S12 and S17 appears to hold together the shoulder and platform of the 30S subunit. This is Small ribosomal subunit protein uS12 from Vibrio atlanticus (strain LGP32) (Vibrio splendidus (strain Mel32)).